A 372-amino-acid chain; its full sequence is MPHQQILMLFGLLPVATNISTWWNFGSMLLTCSALQIMTGFFLSMHYTANINLAFSSIVHVVRDVPHGWMMQNLHAIGASMFFICVYIHVARGLYYGSYLNKETWLSGTTLLIMLMATAFFGYVLPWGQMSFWAATVITNLLTAIPYLGTTMTTWLWGGFAINDPTLTRFFALHFILPFGIISLSSLHIMLLHEEGSSNPLGTNSDIDKIPFHPYHTYKDLFMISSMIMIMLLTISFIPDIFNDPENFSEANPLVTPQHIKPEWYFLFAYGILRSIPNKLGGALALAMSIMILLTVPFTHTANTRSMTFRPFMQLMFWTLVATFMIITWTATKPVEPPYTMISQVTSSLYFMFFMSNPIVGWLENKIMKTQL.

A run of 4 helical transmembrane segments spans residues 25 to 45 (FGSM…FLSM), 69 to 90 (WMMQ…YIHV), 105 to 125 (WLSG…GYVL), and 170 to 190 (FFAL…LHIM). Heme b is bound by residues His75 and His89. Residues His174 and His188 each coordinate heme b. His193 lines the a ubiquinone pocket. The next 4 membrane-spanning stretches (helical) occupy residues 218–238 (YKDL…ISFI), 280–300 (LGGA…PFTH), 312–332 (FMQL…WTAT), and 339–358 (YTMI…MSNP).

This sequence belongs to the cytochrome b family. As to quaternary structure, the cytochrome bc1 complex contains 3 respiratory subunits (MT-CYB, CYC1 and UQCRFS1), 2 core proteins (UQCRC1 and UQCRC2) and probably 6 low-molecular weight proteins. Heme b is required as a cofactor.

The protein localises to the mitochondrion inner membrane. Its function is as follows. Component of the ubiquinol-cytochrome c reductase complex (complex III or cytochrome b-c1 complex) that is part of the mitochondrial respiratory chain. The b-c1 complex mediates electron transfer from ubiquinol to cytochrome c. Contributes to the generation of a proton gradient across the mitochondrial membrane that is then used for ATP synthesis. This is Cytochrome b (MT-CYB) from Acrantophis madagascariensis (Madagascar ground boa).